A 397-amino-acid chain; its full sequence is Nickel-cobalt-cadmium resistance protein NccB (397 aa).

Residues 10–30 (PSWPMIAGVAAAAALVGFGAA) traverse the membrane as a helical segment. The stretch at 137–195 (EAAAMAAERKVAQARADLARKTYERESSLFQQGVTPRQEMESARIALDVAQAEVQRAAT) forms a coiled coil.

The protein belongs to the membrane fusion protein (MFP) (TC 8.A.1) family.

The protein localises to the cell inner membrane. In terms of biological role, component of the NCC cation efflux system that confers resistance to nickel, cobalt and cadmium. In Alcaligenes xylosoxydans xylosoxydans (Achromobacter xylosoxidans), this protein is Nickel-cobalt-cadmium resistance protein NccB (nccB).